Here is a 107-residue protein sequence, read N- to C-terminus: uncharacterized protein (107 aa).

A helical transmembrane segment spans residues 25 to 42 (LSLCSVLLSWLICAMCLW).

Its subcellular location is the host membrane. This is an uncharacterized protein from Galliformes (FAdV-1).